A 362-amino-acid chain; its full sequence is MVTSVAPRVESLSSSGIQSIPKEYIRPQEELTSIGNVFEEEKKDEGPQVPTIDLKDIESEDEVVRREIRERCREELKKAAMEWGVMHLVNHGISDDLINRVKVAGETFFNLPMEEKEKYANDQASGKIAGYGSKLANNASGQLEWEDYFFHLIFPEDKRDMTIWPKTPSDYVPATCEYSVKLRSLATKILSVLSLGLGLEEGRLEKEVGGMEELLLQKKINYYPKCPQPELALGVEAHTDVSALTFILHNMVPGLQLFYEGKWVTAKCVPNSIIMHIGDTIEILSNGKYKSILHRGLVNKEKVRISWAVFCEPPKEKIILKAHCQRRCLRLSHHSSHLAPFPNIFSTSSSGRPRRLYSPNEL.

The region spanning 211-313 is the Fe2OG dioxygenase domain; it reads MEELLLQKKI…RISWAVFCEP (103 aa). Fe cation is bound by residues histidine 238, aspartate 240, and histidine 294.

Belongs to the iron/ascorbate-dependent oxidoreductase family. Fe cation is required as a cofactor. The cofactor is L-ascorbate.

It catalyses the reaction a (2R,3S,4S)-leucoanthocyanidin + 2-oxoglutarate + O2 = a 4-H-anthocyanidin with a 3-hydroxy group + succinate + CO2 + 2 H2O. The protein operates within pigment biosynthesis; anthocyanin biosynthesis. Its function is as follows. Oxidation of leucoanthocyanidins into anthocyanidins. This is Leucoanthocyanidin dioxygenase from Vitis vinifera (Grape).